An 88-amino-acid polypeptide reads, in one-letter code: LYR motif-containing protein 2 (88 aa).

The transit peptide at 1 to 19 directs the protein to the mitochondrion; the sequence is MAVSRLPPAALSLKQFLQR.

It belongs to the complex I LYR family.

Its subcellular location is the mitochondrion. In terms of biological role, involved in efficient integration of the N-module into mitochondrial respiratory chain complex I. The protein is LYR motif-containing protein 2 (lyrm2) of Danio rerio (Zebrafish).